The following is a 1406-amino-acid chain: DNA-directed RNA polymerase subunit beta' (1406 aa).

Cys-70, Cys-72, Cys-85, and Cys-88 together coordinate Zn(2+). Mg(2+) is bound by residues Asp-460, Asp-462, and Asp-464. The Zn(2+) site is built by Cys-814, Cys-889, Cys-896, and Cys-899.

This sequence belongs to the RNA polymerase beta' chain family. As to quaternary structure, the RNAP catalytic core consists of 2 alpha, 1 beta, 1 beta' and 1 omega subunit. When a sigma factor is associated with the core the holoenzyme is formed, which can initiate transcription. Mg(2+) is required as a cofactor. Requires Zn(2+) as cofactor.

It catalyses the reaction RNA(n) + a ribonucleoside 5'-triphosphate = RNA(n+1) + diphosphate. Functionally, DNA-dependent RNA polymerase catalyzes the transcription of DNA into RNA using the four ribonucleoside triphosphates as substrates. The polypeptide is DNA-directed RNA polymerase subunit beta' (Stenotrophomonas maltophilia (strain K279a)).